The following is a 416-amino-acid chain: Homogentisate 1,2-dioxygenase (416 aa).

His275 functions as the Proton acceptor in the catalytic mechanism. Positions 318 and 324 each coordinate Fe cation. Residues Tyr333 and His354 each contribute to the homogentisate site. His354 serves as a coordination point for Fe cation.

Belongs to the homogentisate dioxygenase family. Hexamer; dimer of trimers. The cofactor is Fe cation.

The enzyme catalyses homogentisate + O2 = 4-maleylacetoacetate + H(+). The protein operates within amino-acid degradation; L-phenylalanine degradation; acetoacetate and fumarate from L-phenylalanine: step 4/6. In terms of biological role, involved in the catabolism of homogentisate (2,5-dihydroxyphenylacetate or 2,5-OH-PhAc), a central intermediate in the degradation of phenylalanine and tyrosine. Catalyzes the oxidative ring cleavage of the aromatic ring of homogentisate to yield maleylacetoacetate. In Legionella pneumophila (strain Corby), this protein is Homogentisate 1,2-dioxygenase.